A 490-amino-acid polypeptide reads, in one-letter code: Bifunctional protein HldE (490 aa).

The tract at residues 1 to 330 (MERKNVESLF…GSLGFQHGEG (330 aa)) is ribokinase. An ATP-binding site is contributed by 205–208 (NRKE). Asp275 is a catalytic residue. A cytidylyltransferase region spans residues 356-490 (FTNGCFDLLH…EKILKAYGEE (135 aa)).

It in the N-terminal section; belongs to the carbohydrate kinase PfkB family. The protein in the C-terminal section; belongs to the cytidylyltransferase family. As to quaternary structure, homodimer.

It catalyses the reaction D-glycero-beta-D-manno-heptose 7-phosphate + ATP = D-glycero-beta-D-manno-heptose 1,7-bisphosphate + ADP + H(+). The catalysed reaction is D-glycero-beta-D-manno-heptose 1-phosphate + ATP + H(+) = ADP-D-glycero-beta-D-manno-heptose + diphosphate. It participates in nucleotide-sugar biosynthesis; ADP-L-glycero-beta-D-manno-heptose biosynthesis; ADP-L-glycero-beta-D-manno-heptose from D-glycero-beta-D-manno-heptose 7-phosphate: step 1/4. The protein operates within nucleotide-sugar biosynthesis; ADP-L-glycero-beta-D-manno-heptose biosynthesis; ADP-L-glycero-beta-D-manno-heptose from D-glycero-beta-D-manno-heptose 7-phosphate: step 3/4. Functionally, catalyzes the phosphorylation of D-glycero-D-manno-heptose 7-phosphate at the C-1 position to selectively form D-glycero-beta-D-manno-heptose-1,7-bisphosphate. In terms of biological role, catalyzes the ADP transfer from ATP to D-glycero-beta-D-manno-heptose 1-phosphate, yielding ADP-D-glycero-beta-D-manno-heptose. The protein is Bifunctional protein HldE of Geobacter sulfurreducens (strain ATCC 51573 / DSM 12127 / PCA).